A 141-amino-acid chain; its full sequence is Nucleoside diphosphate kinase (141 aa).

ATP is bound by residues K11, F59, R87, T93, R104, and N114. The Pros-phosphohistidine intermediate role is filled by H117.

The protein belongs to the NDK family. Mg(2+) is required as a cofactor.

It is found in the cytoplasm. The catalysed reaction is a 2'-deoxyribonucleoside 5'-diphosphate + ATP = a 2'-deoxyribonucleoside 5'-triphosphate + ADP. It carries out the reaction a ribonucleoside 5'-diphosphate + ATP = a ribonucleoside 5'-triphosphate + ADP. Major role in the synthesis of nucleoside triphosphates other than ATP. The ATP gamma phosphate is transferred to the NDP beta phosphate via a ping-pong mechanism, using a phosphorylated active-site intermediate. The polypeptide is Nucleoside diphosphate kinase (Staphylothermus marinus (strain ATCC 43588 / DSM 3639 / JCM 9404 / F1)).